Here is a 192-residue protein sequence, read N- to C-terminus: MKTFQLTGTPRAEFGKKAAKAIRKEDQIPAVLYGGKGEGVNFIVSQDAVRNLIYSPEIFLVELTVEGSGSYKAILKEIQFHPVTDRIIHIDFLQVTDEKPVVMEVPVVLTGHAEGVKAGGKLSLEMRKLKVKALYSEIPEKLDIDVSDLQLGKTIQVGELHFEGLTLMNAKNAVVCAVKLTRAARGAAVKKQ.

The protein belongs to the bacterial ribosomal protein bL25 family. CTC subfamily. Part of the 50S ribosomal subunit; part of the 5S rRNA/L5/L18/L25 subcomplex. Contacts the 5S rRNA. Binds to the 5S rRNA independently of L5 and L18.

Functionally, this is one of the proteins that binds to the 5S RNA in the ribosome where it forms part of the central protuberance. The polypeptide is Large ribosomal subunit protein bL25 (Porphyromonas gingivalis (strain ATCC 33277 / DSM 20709 / CIP 103683 / JCM 12257 / NCTC 11834 / 2561)).